A 376-amino-acid polypeptide reads, in one-letter code: Succinyl-diaminopimelate desuccinylase (376 aa).

Position 67 (H67) interacts with Zn(2+). The active site involves D69. D100 lines the Zn(2+) pocket. E134 acts as the Proton acceptor in catalysis. Zn(2+) is bound by residues E135, E163, and H349.

It belongs to the peptidase M20A family. DapE subfamily. In terms of assembly, homodimer. It depends on Zn(2+) as a cofactor. Co(2+) is required as a cofactor.

The catalysed reaction is N-succinyl-(2S,6S)-2,6-diaminopimelate + H2O = (2S,6S)-2,6-diaminopimelate + succinate. Its pathway is amino-acid biosynthesis; L-lysine biosynthesis via DAP pathway; LL-2,6-diaminopimelate from (S)-tetrahydrodipicolinate (succinylase route): step 3/3. In terms of biological role, catalyzes the hydrolysis of N-succinyl-L,L-diaminopimelic acid (SDAP), forming succinate and LL-2,6-diaminopimelate (DAP), an intermediate involved in the bacterial biosynthesis of lysine and meso-diaminopimelic acid, an essential component of bacterial cell walls. The polypeptide is Succinyl-diaminopimelate desuccinylase (Proteus mirabilis (strain HI4320)).